A 48-amino-acid polypeptide reads, in one-letter code: uncharacterized protein (48 aa).

This is an uncharacterized protein from Acidianus convivator (ATV).